Here is a 380-residue protein sequence, read N- to C-terminus: Protein kinase ORF15 (380 aa).

Residues 93 to 371 form the Protein kinase domain; that stretch reads FIPVKVAGCL…LLIAQLTKFI (279 aa). K118 lines the ATP pocket. Residue D217 is the Proton acceptor of the active site.

It belongs to the protein kinase superfamily. Ser/Thr protein kinase family.

The catalysed reaction is L-seryl-[protein] + ATP = O-phospho-L-seryl-[protein] + ADP + H(+). It catalyses the reaction L-threonyl-[protein] + ATP = O-phospho-L-threonyl-[protein] + ADP + H(+). The sequence is that of Protein kinase ORF15 (ORF15) from Ictalurid herpesvirus 1 (strain Auburn) (IcHV-1).